A 330-amino-acid polypeptide reads, in one-letter code: Ketol-acid reductoisomerase (NADP(+)) (330 aa).

Residues methionine 1–threonine 181 form the KARI N-terminal Rossmann domain. NADP(+) is bound by residues tyrosine 24 to glutamine 27, arginine 47, serine 52, and aspartate 82 to glutamine 85. Histidine 107 is an active-site residue. An NADP(+)-binding site is contributed by glycine 133. The KARI C-terminal knotted domain occupies threonine 182–glutamate 327. Positions 190, 194, 226, and 230 each coordinate Mg(2+). Substrate is bound at residue serine 251.

Belongs to the ketol-acid reductoisomerase family. Mg(2+) serves as cofactor.

It catalyses the reaction (2R)-2,3-dihydroxy-3-methylbutanoate + NADP(+) = (2S)-2-acetolactate + NADPH + H(+). The enzyme catalyses (2R,3R)-2,3-dihydroxy-3-methylpentanoate + NADP(+) = (S)-2-ethyl-2-hydroxy-3-oxobutanoate + NADPH + H(+). It functions in the pathway amino-acid biosynthesis; L-isoleucine biosynthesis; L-isoleucine from 2-oxobutanoate: step 2/4. The protein operates within amino-acid biosynthesis; L-valine biosynthesis; L-valine from pyruvate: step 2/4. In terms of biological role, involved in the biosynthesis of branched-chain amino acids (BCAA). Catalyzes an alkyl-migration followed by a ketol-acid reduction of (S)-2-acetolactate (S2AL) to yield (R)-2,3-dihydroxy-isovalerate. In the isomerase reaction, S2AL is rearranged via a Mg-dependent methyl migration to produce 3-hydroxy-3-methyl-2-ketobutyrate (HMKB). In the reductase reaction, this 2-ketoacid undergoes a metal-dependent reduction by NADPH to yield (R)-2,3-dihydroxy-isovalerate. This chain is Ketol-acid reductoisomerase (NADP(+)), found in Methanococcus maripaludis (strain DSM 14266 / JCM 13030 / NBRC 101832 / S2 / LL).